The chain runs to 388 residues: MKHLHRFFSSDASGGIILIIAAILAMIMANSGATSGWYHDFLETPVQLRVGSLEINKNMLLWINDALMAVFFLLVGLEVKRELMQGSLASLRQAAFPVIAAIGGMIVPALLYLAFNYADPITREGWAIPAATDIAFALGVLALLGSRVPLALKIFLMALAIIDDLGAIIIIALFYTNDLSMASLGVAAVAIAVLAVLNLCGVRRTGVYILVGVVLWTAVLKSGVHATLAGVIVGFFIPLKEKHGRSPAKRLEHVLHPWVAYLILPLFAFANAGVSLQGVTLDGLTSILPLGIIAGLLIGKPLGISLFCWLALRLKLAHLPEGTTYQQIMAVGILCGIGFTMSIFIASLAFGSVDPELINWAKLGILVGSISSAVIGYSWLRVRLRPSV.

At 1-11 (MKHLHRFFSSD) the chain is on the cytoplasmic side. The chain crosses the membrane as a helical span at residues 12–31 (ASGGIILIIAAILAMIMANS). Topologically, residues 32–58 (GATSGWYHDFLETPVQLRVGSLEINKN) are periplasmic. The chain crosses the membrane as a helical span at residues 59-80 (MLLWINDALMAVFFLLVGLEVK). Residues 81–96 (RELMQGSLASLRQAAF) are Cytoplasmic-facing. The helical transmembrane segment at 97–116 (PVIAAIGGMIVPALLYLAFN) threads the bilayer. The Periplasmic segment spans residues 117–122 (YADPIT). A helical membrane pass occupies residues 123 to 130 (REGWAIPA). Over 131–154 (ATDIAFALGVLALLGSRVPLALKI) the chain is Cytoplasmic. Residues 155 to 176 (FLMALAIIDDLGAIIIIALFYT) form a helical membrane-spanning segment. Topologically, residues 177–180 (NDLS) are periplasmic. A helical membrane pass occupies residues 181-200 (MASLGVAAVAIAVLAVLNLC). At 201 to 204 (GVRR) the chain is on the cytoplasmic side. The chain crosses the membrane as a helical span at residues 205–222 (TGVYILVGVVLWTAVLKS). A topological domain (periplasmic) is located at residue G223. A helical transmembrane segment spans residues 224 to 236 (VHATLAGVIVGFF). The Cytoplasmic portion of the chain corresponds to 237-253 (IPLKEKHGRSPAKRLEH). A helical transmembrane segment spans residues 254 to 272 (VLHPWVAYLILPLFAFANA). The Periplasmic portion of the chain corresponds to 273-286 (GVSLQGVTLDGLTS). A helical membrane pass occupies residues 287 to 310 (ILPLGIIAGLLIGKPLGISLFCWL). At 311–339 (ALRLKLAHLPEGTTYQQIMAVGILCGIGF) the chain is on the cytoplasmic side. The helical transmembrane segment at 340 to 350 (TMSIFIASLAF) threads the bilayer. Residues 351 to 357 (GSVDPEL) lie on the Periplasmic side of the membrane. Residues 358–380 (INWAKLGILVGSISSAVIGYSWL) form a helical membrane-spanning segment. Residues 381 to 388 (RVRLRPSV) are Cytoplasmic-facing.

This sequence belongs to the NhaA Na(+)/H(+) (TC 2.A.33) antiporter family.

Its subcellular location is the cell inner membrane. The catalysed reaction is Na(+)(in) + 2 H(+)(out) = Na(+)(out) + 2 H(+)(in). In terms of biological role, na(+)/H(+) antiporter that extrudes sodium in exchange for external protons. This Escherichia coli O9:H4 (strain HS) protein is Na(+)/H(+) antiporter NhaA.